A 403-amino-acid chain; its full sequence is Phosphoglycerate kinase (403 aa).

Substrate is bound by residues 24 to 26 (DLN), Arg39, 62 to 65 (HLGR), Arg121, and Arg161. ATP is bound by residues Lys211, Gly299, Glu330, and 359-362 (GGDS).

This sequence belongs to the phosphoglycerate kinase family. Monomer.

It is found in the cytoplasm. It carries out the reaction (2R)-3-phosphoglycerate + ATP = (2R)-3-phospho-glyceroyl phosphate + ADP. It participates in carbohydrate degradation; glycolysis; pyruvate from D-glyceraldehyde 3-phosphate: step 2/5. This is Phosphoglycerate kinase from Rhodococcus jostii (strain RHA1).